A 174-amino-acid chain; its full sequence is Extracellular cysteine protease (174 aa).

Catalysis depends on residues Cys-24, His-120, and Asn-141.

It belongs to the peptidase C47 family. Post-translationally, proteolytically cleaved.

It localises to the secreted. Its subcellular location is the cell wall. Its activity is regulated as follows. Inhibited by heavy metal ions such as Zn(2+) or Ni(2+), iodoacetamide, N-ethylmaleimide, leupeptin, SDS and E-64. Also inhibited by chloromethylketones TPCK and TLCK and by human plasma inhibitor alpha-2-macroglobulin. Stimulated by L-cysteine. In terms of biological role, cysteine protease able to cleave elastin, insulin, myoglobin, fibronectin, fibrinogen, HMW-kininogen, alpha-1-protease inhibitor and alpha-1-antitrypsin. Along with other extracellular proteases may contribute to the colonization and infection of human tissues. This chain is Extracellular cysteine protease (ecpA), found in Staphylococcus epidermidis.